Reading from the N-terminus, the 424-residue chain is uncharacterized protein (424 aa).

Lys259 is modified (N6-(pyridoxal phosphate)lysine).

This sequence belongs to the class-III pyridoxal-phosphate-dependent aminotransferase family. Requires pyridoxal 5'-phosphate as cofactor.

This is an uncharacterized protein from Archaeoglobus fulgidus (strain ATCC 49558 / DSM 4304 / JCM 9628 / NBRC 100126 / VC-16).